The primary structure comprises 68 residues: Conotoxin Cal14.13a (68 aa).

Residues 1-21 form the signal peptide; it reads MKLCVVIVLLMLAMPFNGGEA. The propeptide occupies 22 to 38; it reads SRFFNQHARSQRSGMKT. Val-66 bears the Valine amide mark.

In terms of processing, contains 2 disulfide bonds. Expressed by the venom duct.

It localises to the secreted. Functionally, probable neurotoxin with unknown target. Possibly targets ion channels. This Californiconus californicus (California cone) protein is Conotoxin Cal14.13a.